The primary structure comprises 541 residues: Arginine--tRNA ligase (541 aa).

Residues 119-129 carry the 'HIGH' region motif; it reads ANPTGPLHIGH.

It belongs to the class-I aminoacyl-tRNA synthetase family. Monomer.

Its subcellular location is the cytoplasm. The catalysed reaction is tRNA(Arg) + L-arginine + ATP = L-arginyl-tRNA(Arg) + AMP + diphosphate. This is Arginine--tRNA ligase from Helicobacter acinonychis (strain Sheeba).